We begin with the raw amino-acid sequence, 238 residues long: Peptidyl-tRNA hydrolase (238 aa).

Residue Y14 participates in tRNA binding. The Proton acceptor role is filled by H19. TRNA is bound by residues Y64, N66, and N112. The segment at 202-225 (PAAQSHIHQARNSAQPKKLPETGP) is disordered. Positions 207 to 216 (HIHQARNSAQ) are enriched in polar residues.

This sequence belongs to the PTH family. Monomer.

It is found in the cytoplasm. It carries out the reaction an N-acyl-L-alpha-aminoacyl-tRNA + H2O = an N-acyl-L-amino acid + a tRNA + H(+). Functionally, hydrolyzes ribosome-free peptidyl-tRNAs (with 1 or more amino acids incorporated), which drop off the ribosome during protein synthesis, or as a result of ribosome stalling. Catalyzes the release of premature peptidyl moieties from peptidyl-tRNA molecules trapped in stalled 50S ribosomal subunits, and thus maintains levels of free tRNAs and 50S ribosomes. In Agrobacterium fabrum (strain C58 / ATCC 33970) (Agrobacterium tumefaciens (strain C58)), this protein is Peptidyl-tRNA hydrolase.